The following is an 84-amino-acid chain: Small ribosomal subunit protein uS17c (84 aa).

Belongs to the universal ribosomal protein uS17 family. Part of the 30S ribosomal subunit.

It localises to the plastid. Its subcellular location is the chloroplast. Functionally, one of the primary rRNA binding proteins, it binds specifically to the 5'-end of 16S ribosomal RNA. In Thalassiosira pseudonana (Marine diatom), this protein is Small ribosomal subunit protein uS17c (rps17).